Reading from the N-terminus, the 121-residue chain is Prismalin-14 (121 aa).

A signal peptide spans Met1–Ala16. The residue at position 17 (Gln17) is a Pyrrolidone carboxylic acid. Repeat copies occupy residues Pro48–Arg51, Pro52–Arg55, Pro56–Tyr59, and Pro60–Ile63. The interval Pro48–Ile63 is 4 X 4 AA approximate tandem repeats of P-I-Y-R.

As to expression, expressed only at the mantle edge where it is found predominantly in the inner side of the outer mantle fold.

Its function is as follows. Displays inhibitory activity against calcium carbonate precipitation, binds calcium and affects crystallization of calcium carbonate in vitro. May be involved in calcification of the prismatic layer of the shell. The protein is Prismalin-14 of Pinctada fucata (Akoya pearl oyster).